The sequence spans 193 residues: Putative manganese efflux pump MntP (193 aa).

The next 6 helical transmembrane spans lie at 3–23 (IFAV…VAVV), 41–61 (AAFG…GVSV), 69–89 (DHWI…LSGL), 107–127 (AGRN…AVGL), 130–150 (AILG…CAVI), and 164–184 (LCAL…AIAC).

Belongs to the MntP (TC 9.B.29) family.

The protein localises to the cell inner membrane. Its function is as follows. Probably functions as a manganese efflux pump. This is Putative manganese efflux pump MntP from Desulfovibrio desulfuricans (strain ATCC 27774 / DSM 6949 / MB).